A 168-amino-acid chain; its full sequence is Lipoprotein signal peptidase (168 aa).

Helical transmembrane passes span 5–25, 37–57, 59–79, and 85–105; these read SPYA…KHLV, LVPF…SMFS, FGDT…LYLA, and GHVI…GNLI. Active-site residues include Asp-115 and Asp-133. A helical transmembrane segment spans residues 125 to 145; that stretch reads SFAIFNLADAFISVGAALVVF.

Belongs to the peptidase A8 family.

It localises to the cell inner membrane. The catalysed reaction is Release of signal peptides from bacterial membrane prolipoproteins. Hydrolyzes -Xaa-Yaa-Zaa-|-(S,diacylglyceryl)Cys-, in which Xaa is hydrophobic (preferably Leu), and Yaa (Ala or Ser) and Zaa (Gly or Ala) have small, neutral side chains.. Its pathway is protein modification; lipoprotein biosynthesis (signal peptide cleavage). This protein specifically catalyzes the removal of signal peptides from prolipoproteins. In Mesorhizobium japonicum (strain LMG 29417 / CECT 9101 / MAFF 303099) (Mesorhizobium loti (strain MAFF 303099)), this protein is Lipoprotein signal peptidase.